Here is a 406-residue protein sequence, read N- to C-terminus: Cysteine desulfurase (406 aa).

Lysine 226 bears the N6-(pyridoxal phosphate)lysine mark. The active-site Cysteine persulfide intermediate is cysteine 364.

This sequence belongs to the class-V pyridoxal-phosphate-dependent aminotransferase family. Csd subfamily. Homodimer. Interacts with SufE and the SufBCD complex composed of SufB, SufC and SufD. The interaction with SufE is required to mediate the direct transfer of the sulfur atom from the S-sulfanylcysteine. It depends on pyridoxal 5'-phosphate as a cofactor.

Its subcellular location is the cytoplasm. The catalysed reaction is (sulfur carrier)-H + L-cysteine = (sulfur carrier)-SH + L-alanine. It carries out the reaction L-selenocysteine + AH2 = hydrogenselenide + L-alanine + A + H(+). The protein operates within cofactor biosynthesis; iron-sulfur cluster biosynthesis. Cysteine desulfurases mobilize the sulfur from L-cysteine to yield L-alanine, an essential step in sulfur metabolism for biosynthesis of a variety of sulfur-containing biomolecules. Component of the suf operon, which is activated and required under specific conditions such as oxidative stress and iron limitation. Acts as a potent selenocysteine lyase in vitro, that mobilizes selenium from L-selenocysteine. Selenocysteine lyase activity is however unsure in vivo. The protein is Cysteine desulfurase of Yersinia pseudotuberculosis serotype O:1b (strain IP 31758).